A 122-amino-acid polypeptide reads, in one-letter code: MIQTQSKLDVADNTGAKSVMCIKVLGGSKRRYASVGDVIKVSIKEAAPRGRVKKGEVYSAVVVRTAKGIRRGDGSLVKFDGNAAVLLNAKLEPIGTRIFGPVTRELRTEKFMKIVSLAPEVL.

It belongs to the universal ribosomal protein uL14 family. As to quaternary structure, part of the 50S ribosomal subunit. Forms a cluster with proteins L3 and L19. In the 70S ribosome, L14 and L19 interact and together make contacts with the 16S rRNA in bridges B5 and B8.

In terms of biological role, binds to 23S rRNA. Forms part of two intersubunit bridges in the 70S ribosome. The chain is Large ribosomal subunit protein uL14 from Polaromonas naphthalenivorans (strain CJ2).